A 695-amino-acid chain; its full sequence is DSC E3 ubiquitin ligase complex subunit 1 (695 aa).

Positions 1–25 are cleaved as a signal peptide; the sequence is MDRRRWVPSTPVVTLLLLFMLFAPA. Over 26 to 319 the chain is Lumenal; it reads PRLPSRNGES…KGPRNFVLEN (294 aa). The helical transmembrane segment at 320 to 340 threads the bilayer; it reads HLVRFSSLYIFIVLSQIFVLL. Topologically, residues 341–353 are cytoplasmic; sequence RQMRINSPSHVQR. The helical transmembrane segment at 354-374 threads the bilayer; sequence LSFLTIAMQAGLDAYIAIFFL. Residues 375-382 lie on the Lumenal side of the membrane; the sequence is STNAVIEK. Residues 383 to 403 traverse the membrane as a helical segment; sequence GYLPFVSVAFLSLVPSVMFTM. At 404 to 486 the chain is on the cytoplasmic side; the sequence is RYLALILRVQ…QRDWSAVCLR (83 aa). Residues 419-473 form a disordered region; sequence PPAPRPVTNNSSNNNTNQSNASNENSPNAPSAANDNTETTTVNPPQEDDQPMTQH. Residues 427-454 show a composition bias toward low complexity; it reads NNSSNNNTNQSNASNENSPNAPSAANDN. Residues 487–507 form a helical membrane-spanning segment; sequence FYFIILVVCIASLYSAFWPVI. Topologically, residues 508–509 are lumenal; that stretch reads YR. The helical transmembrane segment at 510–530 threads the bilayer; that stretch reads FYFISALIFTSYSFWIPQIIQ. The Cytoplasmic portion of the chain corresponds to 531 to 540; it reads NVKQGTSRSF. The chain crosses the membrane as a helical span at residues 541-561; sequence TWTYILGASVLRLYLPLAIFI. The Lumenal portion of the chain corresponds to 562-572; sequence DSELILGFPPK. Residues 573-593 traverse the membrane as a helical segment; it reads YFFALGLVLWMLFQVLVLLVQ. Residues 594 to 695 are Cytoplasmic-facing; it reads DTLGPRFFLP…PVCRCHLPAV (102 aa). The segment at 634 to 689 adopts an RING-type; atypical zinc-finger fold; that stretch reads CPICMQPIELVSTGSTLNPASMMVRRNYMLTPCHHLYHRQCLLQWMETRSICPVCR.

As to quaternary structure, component of the DSC E3 ubiquitin ligase complex composed of dsc1, dsc2, dsc3 and dsc4.

Its subcellular location is the endoplasmic reticulum membrane. The protein localises to the golgi apparatus membrane. It catalyses the reaction S-ubiquitinyl-[E2 ubiquitin-conjugating enzyme]-L-cysteine + [acceptor protein]-L-lysine = [E2 ubiquitin-conjugating enzyme]-L-cysteine + N(6)-ubiquitinyl-[acceptor protein]-L-lysine.. It functions in the pathway protein modification; protein ubiquitination. Its function is as follows. Catalytic component of the DSC E3 ubiquitin ligase complex which is required for the sre1 transcriptional activator proteolytic cleavage to release the soluble transcription factor from the membrane in low oxygen or sterol conditions. The complex also plays an important role in the multivesicular body (MVB) pathway and functions in a post-endoplasmic reticulum pathway for protein degradation. This Schizosaccharomyces pombe (strain 972 / ATCC 24843) (Fission yeast) protein is DSC E3 ubiquitin ligase complex subunit 1 (dsc1).